A 331-amino-acid polypeptide reads, in one-letter code: Inositol 2-dehydrogenase (331 aa).

It belongs to the Gfo/Idh/MocA family. As to quaternary structure, homotetramer.

It carries out the reaction myo-inositol + NAD(+) = scyllo-inosose + NADH + H(+). Its function is as follows. Involved in the oxidation of myo-inositol (MI) to 2-keto-myo-inositol (2KMI or 2-inosose). The chain is Inositol 2-dehydrogenase from Renibacterium salmoninarum (strain ATCC 33209 / DSM 20767 / JCM 11484 / NBRC 15589 / NCIMB 2235).